The primary structure comprises 415 residues: Probable peptidoglycan glycosyltransferase FtsW (415 aa).

Helical transmembrane passes span 31 to 51, 63 to 83, 97 to 117, 133 to 153, 162 to 182, 185 to 205, 206 to 226, 245 to 265, 285 to 305, 326 to 346, and 361 to 381; these read PILMVAVLALLAWGLVMVTSA, FFFVIRQTIAVVIGASITVWL, LWILIASLLLLLVVLLPGIGH, IQVSEFARLGLIIWMAGYIAT, ITGMLGPGVVIFAASLLLLLQ, FGTTAVLAATLFAMAWLARAQ, WQMMVGSTLVMGVLGVFVVLS, FGHGYQLANALIAIGTGGVWG, FIFAVLAEELGLIGVIALIGL, IAGAALAWGISVWIGMQALIN, and LPLMSYGGSAMIVALISLGFL.

This sequence belongs to the SEDS family. FtsW subfamily.

It localises to the cell inner membrane. The enzyme catalyses [GlcNAc-(1-&gt;4)-Mur2Ac(oyl-L-Ala-gamma-D-Glu-L-Lys-D-Ala-D-Ala)](n)-di-trans,octa-cis-undecaprenyl diphosphate + beta-D-GlcNAc-(1-&gt;4)-Mur2Ac(oyl-L-Ala-gamma-D-Glu-L-Lys-D-Ala-D-Ala)-di-trans,octa-cis-undecaprenyl diphosphate = [GlcNAc-(1-&gt;4)-Mur2Ac(oyl-L-Ala-gamma-D-Glu-L-Lys-D-Ala-D-Ala)](n+1)-di-trans,octa-cis-undecaprenyl diphosphate + di-trans,octa-cis-undecaprenyl diphosphate + H(+). It participates in cell wall biogenesis; peptidoglycan biosynthesis. Peptidoglycan polymerase that is essential for cell division. This Halothiobacillus neapolitanus (strain ATCC 23641 / c2) (Thiobacillus neapolitanus) protein is Probable peptidoglycan glycosyltransferase FtsW.